Consider the following 512-residue polypeptide: ATP synthase subunit alpha (512 aa).

169-176 (GDRQTGKT) contributes to the ATP binding site.

The protein belongs to the ATPase alpha/beta chains family. In terms of assembly, F-type ATPases have 2 components, CF(1) - the catalytic core - and CF(0) - the membrane proton channel. CF(1) has five subunits: alpha(3), beta(3), gamma(1), delta(1), epsilon(1). CF(0) has three main subunits: a(1), b(2) and c(9-12). The alpha and beta chains form an alternating ring which encloses part of the gamma chain. CF(1) is attached to CF(0) by a central stalk formed by the gamma and epsilon chains, while a peripheral stalk is formed by the delta and b chains.

Its subcellular location is the cell inner membrane. It carries out the reaction ATP + H2O + 4 H(+)(in) = ADP + phosphate + 5 H(+)(out). Functionally, produces ATP from ADP in the presence of a proton gradient across the membrane. The alpha chain is a regulatory subunit. The protein is ATP synthase subunit alpha of Ruegeria pomeroyi (strain ATCC 700808 / DSM 15171 / DSS-3) (Silicibacter pomeroyi).